Reading from the N-terminus, the 325-residue chain is MATH domain and coiled-coil domain-containing protein At3g58340 (325 aa).

The 126-residue stretch at 6–131 (DKKFCWEIKN…NGQVMIVAEV (126 aa)) folds into the MATH domain. A coiled-coil region spans residues 266–315 (KVDWLEKKLDHVKEKKEKEQSGLIILQGIEQQLHELMHKCEKKKSEVLSV).

This is MATH domain and coiled-coil domain-containing protein At3g58340 from Arabidopsis thaliana (Mouse-ear cress).